A 58-amino-acid polypeptide reads, in one-letter code: Photosystem II reaction center protein K (58 aa).

Residues 1-21 (MFDLYLKNLLDLSDSGTVVLA) constitute a propeptide that is removed on maturation. Residues 29 to 49 (IFDPIVDVLPVIPVFFLLLAF) traverse the membrane as a helical segment.

The protein belongs to the PsbK family. In terms of assembly, PSII is composed of 1 copy each of membrane proteins PsbA, PsbB, PsbC, PsbD, PsbE, PsbF, PsbH, PsbI, PsbJ, PsbK, PsbL, PsbM, PsbT, PsbX, PsbY, PsbZ, Psb30/Ycf12, at least 3 peripheral proteins of the oxygen-evolving complex and a large number of cofactors. It forms dimeric complexes.

It localises to the plastid. Its subcellular location is the chloroplast thylakoid membrane. Functionally, one of the components of the core complex of photosystem II (PSII). PSII is a light-driven water:plastoquinone oxidoreductase that uses light energy to abstract electrons from H(2)O, generating O(2) and a proton gradient subsequently used for ATP formation. It consists of a core antenna complex that captures photons, and an electron transfer chain that converts photonic excitation into a charge separation. The sequence is that of Photosystem II reaction center protein K from Zygnema circumcarinatum (Green alga).